Consider the following 326-residue polypeptide: Glutaminase 2 (326 aa).

Residues Ser-73, Asn-125, Glu-169, Asn-176, Tyr-200, Tyr-252, and Val-270 each coordinate substrate.

Belongs to the glutaminase family. Homotetramer.

The enzyme catalyses L-glutamine + H2O = L-glutamate + NH4(+). This is Glutaminase 2 from Bacillus anthracis.